The primary structure comprises 254 residues: Probable phosphatase Shew185_1467 (254 aa).

Positions 8, 10, 16, 41, 74, 102, 132, 193, and 195 each coordinate Zn(2+).

It belongs to the PHP family. Zn(2+) serves as cofactor.

The polypeptide is Probable phosphatase Shew185_1467 (Shewanella baltica (strain OS185)).